Here is a 269-residue protein sequence, read N- to C-terminus: GTP cyclohydrolase FolE2 (269 aa).

This sequence belongs to the GTP cyclohydrolase IV family.

It catalyses the reaction GTP + H2O = 7,8-dihydroneopterin 3'-triphosphate + formate + H(+). It functions in the pathway cofactor biosynthesis; 7,8-dihydroneopterin triphosphate biosynthesis; 7,8-dihydroneopterin triphosphate from GTP: step 1/1. Functionally, converts GTP to 7,8-dihydroneopterin triphosphate. The chain is GTP cyclohydrolase FolE2 from Burkholderia thailandensis (strain ATCC 700388 / DSM 13276 / CCUG 48851 / CIP 106301 / E264).